We begin with the raw amino-acid sequence, 198 residues long: Ras-related protein Rab-34, isoform NARR (198 aa).

13 tandem repeats follow at residues Pro-7–Arg-15, Pro-16–Arg-24, Pro-25–Arg-33, Pro-34–Arg-42, Ala-43–Pro-51, Arg-52–Ser-60, Pro-61–Thr-69, Pro-70–Ser-78, Pro-79–Ser-87, Pro-88–Ser-96, Pro-97–Ser-105, Pro-106–Thr-114, and Pro-115–Ser-123. The segment at Pro-7–Arg-125 is 13 x 9 AA approximate tandem-repeats of P-R-V-I-V-G-(S/T)-P-R. Ser-13 is subject to Phosphoserine. Residues Ile-37 to Arg-64 form a disordered region. Thr-69 carries the post-translational modification Phosphothreonine. A phosphoserine mark is found at Ser-78, Ser-87, and Ser-96. Positions Val-94–Val-121 are enriched in low complexity. Residues Val-94–Ile-198 are disordered. Residue Ser-123 is modified to Phosphoserine. Positions Arg-145–Gly-157 are enriched in basic and acidic residues. Residues Gly-161–Arg-178 are compositionally biased toward low complexity.

In terms of assembly, may interact with EIF5A and ERF1. Post-translationally, phosphorylated during M-phase.

The protein resides in the nucleus. It localises to the nucleolus. This Homo sapiens (Human) protein is Ras-related protein Rab-34, isoform NARR (RAB34).